A 131-amino-acid polypeptide reads, in one-letter code: D-ribose pyranase (131 aa).

Residue His20 is the Proton donor of the active site. Substrate-binding positions include Asp28, His98, and 120 to 122 (YCN).

This sequence belongs to the RbsD / FucU family. RbsD subfamily. In terms of assembly, homodecamer.

It localises to the cytoplasm. It catalyses the reaction beta-D-ribopyranose = beta-D-ribofuranose. It functions in the pathway carbohydrate metabolism; D-ribose degradation; D-ribose 5-phosphate from beta-D-ribopyranose: step 1/2. Its function is as follows. Catalyzes the interconversion of beta-pyran and beta-furan forms of D-ribose. The chain is D-ribose pyranase from Coprothermobacter proteolyticus (strain ATCC 35245 / DSM 5265 / OCM 4 / BT).